The following is a 140-amino-acid chain: Coiled-coil domain-containing protein 126 (140 aa).

Positions 1-26 (MFFTISRKNMSQKLSLLLLVFGLIWG) are cleaved as a signal peptide. 2 N-linked (GlcNAc...) asparagine glycosylation sites follow: Asn-110 and Asn-134. Positions 120–140 (TSGNLVPVTTNKRTNVSGSIR) are disordered.

It is found in the secreted. The chain is Coiled-coil domain-containing protein 126 (CCDC126) from Homo sapiens (Human).